The sequence spans 245 residues: tRNA1(Val) (adenine(37)-N6)-methyltransferase (245 aa).

Belongs to the methyltransferase superfamily. tRNA (adenine-N(6)-)-methyltransferase family.

The protein localises to the cytoplasm. The catalysed reaction is adenosine(37) in tRNA1(Val) + S-adenosyl-L-methionine = N(6)-methyladenosine(37) in tRNA1(Val) + S-adenosyl-L-homocysteine + H(+). In terms of biological role, specifically methylates the adenine in position 37 of tRNA(1)(Val) (anticodon cmo5UAC). This chain is tRNA1(Val) (adenine(37)-N6)-methyltransferase, found in Escherichia coli O157:H7 (strain EC4115 / EHEC).